The sequence spans 397 residues: Acetate kinase (397 aa).

Asparagine 7 lines the Mg(2+) pocket. Lysine 14 contributes to the ATP binding site. Arginine 90 contacts substrate. The active-site Proton donor/acceptor is aspartate 147. ATP is bound by residues 207 to 211 (HLGNG), 282 to 284 (DFR), and 330 to 334 (GLGEN). Glutamate 383 is a Mg(2+) binding site.

This sequence belongs to the acetokinase family. Homodimer. It depends on Mg(2+) as a cofactor. Mn(2+) is required as a cofactor.

The protein localises to the cytoplasm. The enzyme catalyses acetate + ATP = acetyl phosphate + ADP. The protein operates within metabolic intermediate biosynthesis; acetyl-CoA biosynthesis; acetyl-CoA from acetate: step 1/2. Its function is as follows. Catalyzes the formation of acetyl phosphate from acetate and ATP. Can also catalyze the reverse reaction. The chain is Acetate kinase from Clostridium botulinum (strain Okra / Type B1).